The primary structure comprises 191 residues: 3-isopropylmalate dehydratase small subunit (191 aa).

It belongs to the LeuD family. LeuD type 1 subfamily. As to quaternary structure, heterodimer of LeuC and LeuD.

The catalysed reaction is (2R,3S)-3-isopropylmalate = (2S)-2-isopropylmalate. The protein operates within amino-acid biosynthesis; L-leucine biosynthesis; L-leucine from 3-methyl-2-oxobutanoate: step 2/4. Its function is as follows. Catalyzes the isomerization between 2-isopropylmalate and 3-isopropylmalate, via the formation of 2-isopropylmaleate. In Solibacter usitatus (strain Ellin6076), this protein is 3-isopropylmalate dehydratase small subunit.